The sequence spans 159 residues: Endoribonuclease YbeY (159 aa).

Residues histidine 114, histidine 118, and histidine 124 each contribute to the Zn(2+) site.

This sequence belongs to the endoribonuclease YbeY family. The cofactor is Zn(2+).

It is found in the cytoplasm. Functionally, single strand-specific metallo-endoribonuclease involved in late-stage 70S ribosome quality control and in maturation of the 3' terminus of the 16S rRNA. The chain is Endoribonuclease YbeY from Pectobacterium carotovorum subsp. carotovorum (strain PC1).